The following is a 226-amino-acid chain: ATP-dependent dethiobiotin synthetase BioD (226 aa).

12–17 contributes to the ATP binding site; sequence GVGKTV. Threonine 16 serves as a coordination point for Mg(2+). Lysine 37 is a catalytic residue. Threonine 41 is a substrate binding site. Residues aspartate 49, 108–111, 169–170, and 197–199 each bind ATP; these read EGAG, GS, and PAG. The Mg(2+) site is built by aspartate 49 and glutamate 108.

It belongs to the dethiobiotin synthetase family. Homodimer. The cofactor is Mg(2+).

The protein resides in the cytoplasm. It carries out the reaction (7R,8S)-7,8-diammoniononanoate + CO2 + ATP = (4R,5S)-dethiobiotin + ADP + phosphate + 3 H(+). It functions in the pathway cofactor biosynthesis; biotin biosynthesis; biotin from 7,8-diaminononanoate: step 1/2. In terms of biological role, catalyzes a mechanistically unusual reaction, the ATP-dependent insertion of CO2 between the N7 and N8 nitrogen atoms of 7,8-diaminopelargonic acid (DAPA, also called 7,8-diammoniononanoate) to form a ureido ring. The sequence is that of ATP-dependent dethiobiotin synthetase BioD from Mycobacterium leprae (strain Br4923).